A 521-amino-acid polypeptide reads, in one-letter code: Cholesterol side-chain cleavage enzyme, mitochondrial (521 aa).

The transit peptide at 1-39 (MLAKGLPPRSVLVKGCQTFLSAPKERLGHLRVPTSEGAG) directs the protein to the mitochondrion. Cys-462 contacts heme.

This sequence belongs to the cytochrome P450 family. In terms of assembly, interacts with FDX1/adrenodoxin. It depends on heme as a cofactor.

The protein localises to the mitochondrion inner membrane. It carries out the reaction 6 reduced [adrenodoxin] + cholesterol + 3 O2 + 6 H(+) = 4-methylpentanal + pregnenolone + 6 oxidized [adrenodoxin] + 4 H2O. It catalyses the reaction 2 reduced [adrenodoxin] + cholesterol + O2 + 2 H(+) = (22R)-hydroxycholesterol + 2 oxidized [adrenodoxin] + H2O. The enzyme catalyses (22R)-hydroxycholesterol + 2 reduced [adrenodoxin] + O2 + 2 H(+) = (20R,22R)-20,22-dihydroxycholesterol + 2 oxidized [adrenodoxin] + H2O. The catalysed reaction is (20R,22R)-20,22-dihydroxycholesterol + 2 reduced [adrenodoxin] + O2 + 2 H(+) = 4-methylpentanal + pregnenolone + 2 oxidized [adrenodoxin] + 2 H2O. The protein operates within lipid metabolism; C21-steroid hormone metabolism. Its pathway is steroid metabolism; cholesterol metabolism. A cytochrome P450 monooxygenase that catalyzes the side-chain hydroxylation and cleavage of cholesterol to pregnenolone, the precursor of most steroid hormones. Catalyzes three sequential oxidation reactions of cholesterol, namely the hydroxylation at C22 followed with the hydroxylation at C20 to yield 20R,22R-hydroxycholesterol that is further cleaved between C20 and C22 to yield the C21-steroid pregnenolone and 4-methylpentanal. Mechanistically, uses molecular oxygen inserting one oxygen atom into a substrate and reducing the second into a water molecule. Two electrons are provided by NADPH via a two-protein mitochondrial transfer system comprising flavoprotein FDXR (adrenodoxin/ferredoxin reductase) and nonheme iron-sulfur protein FDX1 or FDX2 (adrenodoxin/ferredoxin). The chain is Cholesterol side-chain cleavage enzyme, mitochondrial (CYP11A1) from Macaca fascicularis (Crab-eating macaque).